The chain runs to 659 residues: DNA ligase (659 aa).

Residues 32–36 (DQQYD), 81–82 (SL), and E110 contribute to the NAD(+) site. K112 serves as the catalytic N6-AMP-lysine intermediate. Residues R133, E167, K282, and K306 each coordinate NAD(+). Positions 399, 402, 415, and 420 each coordinate Zn(2+). Positions 582–659 (IKNNIFKNKK…QEHEFEELIK (78 aa)) constitute a BRCT domain.

Belongs to the NAD-dependent DNA ligase family. LigA subfamily. Requires Mg(2+) as cofactor. Mn(2+) is required as a cofactor.

It catalyses the reaction NAD(+) + (deoxyribonucleotide)n-3'-hydroxyl + 5'-phospho-(deoxyribonucleotide)m = (deoxyribonucleotide)n+m + AMP + beta-nicotinamide D-nucleotide.. Its function is as follows. DNA ligase that catalyzes the formation of phosphodiester linkages between 5'-phosphoryl and 3'-hydroxyl groups in double-stranded DNA using NAD as a coenzyme and as the energy source for the reaction. It is essential for DNA replication and repair of damaged DNA. The polypeptide is DNA ligase (Phytoplasma mali (strain AT)).